The sequence spans 320 residues: Cytochrome f (320 aa).

The N-terminal stretch at 1-35 (MQTRNTFSWIKEQITRSISASLMIYIITRTSISNA) is a signal peptide. Positions 36, 56, 59, and 60 each coordinate heme. A helical transmembrane segment spans residues 286–306 (VQGLLFFFAAVILAQIFLVLK).

The protein belongs to the cytochrome f family. As to quaternary structure, the 4 large subunits of the cytochrome b6-f complex are cytochrome b6, subunit IV (17 kDa polypeptide, petD), cytochrome f and the Rieske protein, while the 4 small subunits are PetG, PetL, PetM and PetN. The complex functions as a dimer. It depends on heme as a cofactor.

It localises to the plastid. The protein resides in the chloroplast thylakoid membrane. In terms of biological role, component of the cytochrome b6-f complex, which mediates electron transfer between photosystem II (PSII) and photosystem I (PSI), cyclic electron flow around PSI, and state transitions. The protein is Cytochrome f of Helianthus annuus (Common sunflower).